The chain runs to 228 residues: Ribulose-phosphate 3-epimerase (228 aa).

Residue Ser9 participates in substrate binding. Positions 34, 36, 68, and 177 each coordinate a divalent metal cation. Asp36 (proton acceptor) is an active-site residue. Residues His68, 177-179 (DGG), and 199-200 (GS) contribute to the substrate site. Asp177 functions as the Proton donor in the catalytic mechanism.

This sequence belongs to the ribulose-phosphate 3-epimerase family. A divalent metal cation serves as cofactor.

The catalysed reaction is D-ribulose 5-phosphate = D-xylulose 5-phosphate. Its pathway is carbohydrate degradation. Catalyzes the reversible epimerization of D-ribulose 5-phosphate to D-xylulose 5-phosphate. This is Ribulose-phosphate 3-epimerase from Buchnera aphidicola subsp. Schizaphis graminum (strain Sg).